We begin with the raw amino-acid sequence, 348 residues long: Rhodopsin (348 aa).

M1 is modified (N-acetylmethionine). Residues 1-36 (MNGTEGPNFYVPFSNATGVVRSPFEYPQYYLAEPWQ) lie on the Extracellular side of the membrane. N-linked (GlcNAc...) asparagine glycans are attached at residues N2 and N15. A helical transmembrane segment spans residues 37–61 (FSMLAAYMFLLIVLGFPINFLTLYV). Over 62–73 (TVQHKKLRTPLN) the chain is Cytoplasmic. The helical transmembrane segment at 74–96 (YILLNLAVADLFMVLGGFTSTLY) threads the bilayer. At 97–110 (TSLHGYFVFGPTGC) the chain is on the extracellular side. C110 and C187 are oxidised to a cystine. The chain crosses the membrane as a helical span at residues 111–133 (NLEGFFATLGGEIALWSLVVLAI). A 'Ionic lock' involved in activated form stabilization motif is present at residues 134-136 (ERY). At 134–152 (ERYVVVCKPMSNFRFGENH) the chain is on the cytoplasmic side. The helical transmembrane segment at 153–173 (AIMGVAFTWVMALACAAPPLA) threads the bilayer. Residues 174–202 (GWSRYIPEGLQCSCGIDYYTLKPEVNNES) are Extracellular-facing. E201 provides a ligand contact to Zn(2+). Residues 203 to 224 (FVIYMFVVHFTIPMIIIFFCYG) form a helical membrane-spanning segment. At 225–252 (QLVFTVKEAAAQQQESATTQKAEKEVTR) the chain is on the cytoplasmic side. Residues 253–274 (MVIIMVIAFLICWVPYASVAFY) traverse the membrane as a helical segment. The Extracellular segment spans residues 275–284 (IFTHQGSNFG). Zn(2+) is bound at residue Q279. A helical transmembrane segment spans residues 285-309 (PIFMTIPAFFAKSAAIYNPVIYIMM). N6-(retinylidene)lysine is present on K296. Residues 310 to 348 (NKQFRNCMLTTICCGKNPLGDDEASATVSKTETSQVAPA) are Cytoplasmic-facing. Residues C322 and C323 are each lipidated (S-palmitoyl cysteine). Residues 330 to 348 (DDEASATVSKTETSQVAPA) are interaction with SAG. The residue at position 334 (S334) is a Phosphoserine. At T336 the chain carries Phosphothreonine. Position 338 is a phosphoserine (S338). T340 and T342 each carry phosphothreonine. A Phosphoserine modification is found at S343.

Belongs to the G-protein coupled receptor 1 family. Opsin subfamily. Homodimer. May form a complex composed of RHO, GRK1 and RCVRN in a Ca(2+)-dependent manner; RCVRN prevents the interaction between GRK1 and RHO. Interacts with GRK1. Interacts (phosphorylated form) with SAG. Interacts with GNAT1. Interacts with GNAT3. SAG and G-proteins compete for a common binding site. Interacts with PRCD; the interaction promotes PRCD stability. Forms a complex with ASAP1 and ARF4. Forms a complex with ASAP1, RAB11A, Rabin8/RAB3IP, ARF4 and RAB11FIP3; the complex regulates Golgi-to-cilia rhodopsin/RHO transport in photoreceptors. Phosphorylated on some or all of the serine and threonine residues present in the C-terminal region. After activation by light, phosphorylated by GRK1 (in vitro). Post-translationally, contains one covalently linked retinal chromophore. Upon light absorption, the covalently bound 11-cis-retinal is converted to all-trans-retinal. After hydrolysis of the Schiff base and release of the covalently bound all-trans-retinal, active rhodopsin is regenerated by binding of a fresh molecule of 11-cis-retinal. In terms of tissue distribution, rod shaped photoreceptor cells which mediate vision in dim light.

The protein resides in the membrane. Its subcellular location is the cell projection. It is found in the cilium. It localises to the photoreceptor outer segment. Photoreceptor required for image-forming vision at low light intensity. Required for photoreceptor cell viability after birth. Light-induced isomerization of the chromophore 11-cis-retinal to all-trans-retinal triggers a conformational change that activates signaling via G-proteins. Subsequent receptor phosphorylation mediates displacement of the bound G-protein alpha subunit by the arrestin SAG and terminates signaling. The chain is Rhodopsin (RHO) from Homo sapiens (Human).